The chain runs to 2241 residues: Little elongation complex subunit 1 (2241 aa).

Positions 22-185 (CASLQQNLNE…KQKNEKELRH (164 aa)) form a coiled coil. 2 stretches are compositionally biased toward basic and acidic residues: residues 222-233 (GEGGRRIPEKPA) and 296-315 (AFCE…DGNR). Disordered regions lie at residues 222–255 (GEGG…GGPA), 273–315 (GDFS…DGNR), and 368–387 (GEFT…SMES). Serine 523 carries the phosphoserine modification. The segment at 552–590 (EFSKRTLTDGSASKSPCVTGSGRFQRRERDVRESTPQSG) is disordered. Residues 559–569 (TDGSASKSPCV) are compositionally biased toward polar residues. Phosphoserine is present on serine 676. The disordered stretch occupies residues 703 to 817 (TAKGHSLPQS…PSGESTIPPE (115 aa)). Gly residues predominate over residues 718 to 728 (TGGGQCKGRGP). Residues 738 to 760 (DWTSLARSQAGFTRRSSGSADST) show a composition bias toward polar residues. Residue threonine 803 is modified to Phosphothreonine. Serine 896 carries the post-translational modification Phosphoserine. The disordered stretch occupies residues 971–1119 (SGVTSGVFPA…VGEAGHPSDV (149 aa)). The segment covering 1065 to 1074 (EEDTEVEDEA) has biased composition (acidic residues). The segment covering 1091 to 1104 (RQQEQAEDSHRPLG) has biased composition (basic and acidic residues). At lysine 1189 the chain carries N6-acetyllysine. Disordered regions lie at residues 1231-1328 (SDVL…CLSI), 1419-1475 (ASSQ…KSRL), and 1543-1671 (VHLN…AAAS). Residues 1252–1266 (DTEHALLESTHHSQA) show a composition bias toward basic and acidic residues. A compositionally biased stretch (polar residues) spans 1460–1470 (DISSNGQSANF). Phosphoserine is present on residues serine 1553 and serine 1582. A compositionally biased stretch (polar residues) spans 1574 to 1585 (DRSTPTNCSPDT). Positions 1595-1606 (PPLPPLLPPLIA) are enriched in pro residues. Threonine 1607 carries the post-translational modification Phosphothreonine. Residues serine 1657, serine 1662, serine 1664, serine 1666, and serine 1677 each carry the phosphoserine modification. Disordered stretches follow at residues 1777 to 1800 (GSSG…AGGK) and 1812 to 1843 (KRLR…GSPL). The span at 1781–1794 (ADGSQGKSQDSGVQ) shows a compositional bias: polar residues. Over residues 1814–1829 (LRLDNKSPEPDTREVT) the composition is skewed to basic and acidic residues. The residue at position 1820 (serine 1820) is a Phosphoserine.

This sequence belongs to the ICE1 family. As to quaternary structure, component of the little elongation complex (LEC), at least composed of ELL (ELL, ELL2 or ELL3), ZC3H8, ICE1 and ICE2. Interacts (via N-terminus domain) with ELL. Interacts (via C-terminus domain) with ICE2 and ZC3H8.

The protein localises to the nucleus. It localises to the cajal body. Functionally, component of the little elongation complex (LEC), a complex required to regulate small nuclear RNA (snRNA) gene transcription by RNA polymerase II and III. Specifically acts as a scaffold protein that promotes the LEC complex formation and recruitment and RNA polymerase II occupancy at snRNA genes in subnuclear bodies. The polypeptide is Little elongation complex subunit 1 (Ice1) (Mus musculus (Mouse)).